A 688-amino-acid polypeptide reads, in one-letter code: Collagen alpha-2(IX) chain (688 aa).

The signal sequence occupies residues 1 to 22; the sequence is MAPAADPRSLLVLLQVLGLALA. The tract at residues 26–162 is triple-helical region 4 (COL4); that stretch reads GLPGEPGPPG…PGKPGRPGTI (137 aa). Disordered stretches follow at residues 26–520, 549–578, and 590–662; these read GLPG…RDAS, GATG…PGPR, and IGNT…LPGF. Composition is skewed to pro residues over residues 30–42 and 105–126; these read EPGP…PPGV and LPGP…PGPV. Over residues 128 to 138 the composition is skewed to low complexity; that stretch reads LPGEIGLTGPK. Positions 143-156 are enriched in pro residues; that stretch reads PEGPSGPPGPPGKP. The residue at position 159 (P159) is a 4-hydroxyproline. The tract at residues 163-179 is nonhelical region 4 (NC4); sequence QGLEGSADFLCPTNCPA. O-linked (Xyl...) (glycosaminoglycan) serine glycosylation occurs at S168. Residues 180 to 518 form a triple-helical region 3 (COL3) region; that stretch reads GVKGPPGLQG…PGRQGVAGRD (339 aa). K182 is subject to 5-hydroxylysine. K182 is a glycosylation site (O-linked (Gal...) hydroxylysine). Composition is skewed to low complexity over residues 251-265 and 394-412; these read KGMV…SPGE and PVGQ…EQGP. The span at 435–444 shows a compositional bias: gly residues; sequence GPRGGVGDPG. Residues 497–506 are compositionally biased toward low complexity; that stretch reads RGLVGDRGLP. The nonhelical region 3 (NC3) stretch occupies residues 519–548; that stretch reads ASDQHIEDVVLKMLQEQLAEMAVSAKREAL. A triple-helical region 2 (COL2) region spans residues 549-631; it reads GATGMMGPPG…PGLPGRPGQA (83 aa). Residues 556 to 565 show a composition bias toward pro residues; the sequence is PPGPPGPPGY. Over residues 598–610 the composition is skewed to basic and acidic residues; it reads KRGEKGDQGEVGR. Residues 632-633 are nonhelical region 2 (NC2); that stretch reads IN. Residues 634–663 are triple-helical region 1 (COL1); that stretch reads GKDGDRGAPGAPGEAGRPGLPGPIGLPGFC. Residues 641–651 show a composition bias toward low complexity; sequence APGAPGEAGRP. The nonhelical region 1 (NC1) stretch occupies residues 664–688; sequence EPAACLGASAYASGRLTEPGSIKGP.

It belongs to the fibril-associated collagens with interrupted helices (FACIT) family. In terms of assembly, heterotrimer of an alpha 1(IX), an alpha 2(IX) and an alpha 3(IX) chain. The chains are linked to each other by interchain disulfide bonds. Trimers are also cross-linked via hydroxylysines. In terms of processing, prolines at the third position of the tripeptide repeating unit (G-X-Y) are hydroxylated in some or all of the chains. Post-translationally, covalently linked to the telopeptides of type II collagen by hydroxylysine-derived cross-links.

The protein resides in the secreted. It localises to the extracellular space. Its subcellular location is the extracellular matrix. Its function is as follows. Structural component of hyaline cartilage and vitreous of the eye. The sequence is that of Collagen alpha-2(IX) chain from Bos taurus (Bovine).